A 121-amino-acid polypeptide reads, in one-letter code: Glycine cleavage system H protein (121 aa).

The 81-residue stretch at 22 to 102 (IAWVGITKYA…DSSVWLFKAE (81 aa)) folds into the Lipoyl-binding domain. Lys63 carries the N6-lipoyllysine modification.

The protein belongs to the GcvH family. The glycine cleavage system is composed of four proteins: P, T, L and H. The cofactor is (R)-lipoate.

Functionally, the glycine cleavage system catalyzes the degradation of glycine. The H protein shuttles the methylamine group of glycine from the P protein to the T protein. The chain is Glycine cleavage system H protein from Tropheryma whipplei (strain TW08/27) (Whipple's bacillus).